The sequence spans 330 residues: Olfactory receptor 5P70 (330 aa).

At 1–28 (MAFLEDGNHTIVTEFILLGLTDDPVLRD) the chain is on the extracellular side. N-linked (GlcNAc...) asparagine glycosylation occurs at Asn-8. A helical transmembrane segment spans residues 29–49 (ILFTIILCIYLVTVSGNLSTI). Residues 50 to 57 (LLIRVSSQ) lie on the Cytoplasmic side of the membrane. The helical transmembrane segment at 58 to 78 (LHHPMYFFLSHLASVDIGISS) threads the bilayer. Residues 79 to 102 (SVTPNMLANFLVKPNTISYIGCSI) lie on the Extracellular side of the membrane. Cysteines 100 and 192 form a disulfide. Residues 103–123 (QFTSAVFLATVECFLLAAMAY) form a helical membrane-spanning segment. Residues 124–136 (DRFVAICNPLLYS) lie on the Cytoplasmic side of the membrane. Residues 137 to 157 (TKMSREACIQLVVGSYIQGLL) form a helical membrane-spanning segment. The Extracellular portion of the chain corresponds to 158–199 (NASFFTLSFFSLIFCGPNRINHFYCDLAPLVELSCSDVTLAV). Residues 200 to 220 (VITSISAGFITLTTVFVIAIS) form a helical membrane-spanning segment. Residues 221–240 (YSCIFITIMKMHSTESRYKA) lie on the Cytoplasmic side of the membrane. Residues 241–261 (FSTCTSHLTAVTLFYGTTMFI) form a helical membrane-spanning segment. Over 262-274 (YVMPKSSYSTDQN) the chain is Extracellular. Residues 275 to 295 (KVLSVFYMVVIPMLNPLIYSL) traverse the membrane as a helical segment. Topologically, residues 296–330 (RNNEIKGALKRYLGKKIFSYGNLFCKTHYNDTHQV) are cytoplasmic.

It belongs to the G-protein coupled receptor 1 family.

Its subcellular location is the cell membrane. Functionally, potential odorant receptor. The protein is Olfactory receptor 5P70 of Mus musculus (Mouse).